Here is a 336-residue protein sequence, read N- to C-terminus: HTH-type transcriptional regulator SyrM (336 aa).

One can recognise an HTH lysR-type domain in the interval 41–98; it reads IDLNLLVALEALLEYRNVTHAGQHIGRSQPAMSRALGRLRGLFNDDLLVRSSTGLIPT. Positions 58–77 form a DNA-binding region, H-T-H motif; it reads VTHAGQHIGRSQPAMSRALG.

Belongs to the LysR transcriptional regulatory family.

Functionally, acts in trans to stimulate nod gene expression via nodD3 and exo gene expression via SyrA. This Rhizobium etli protein is HTH-type transcriptional regulator SyrM (syrM).